The chain runs to 365 residues: MDFSNINGFVVLDKPQGPTSHQVDHWVREILGIEKVAHIGTLDPNVTGVLTMAIGKAVRLVDVVHESPKEYVGVMRFYEDITEEEVRYYFKKFTGRIYQLPPVRSAVARSLRIKTVYSLDLLEKKDRLVLFHVKCESGTYIRTLCTDIGYVSGKGGQMVDLRRTSTGPFSEDRCITLQDFAAMVELARKGEDKLLRDHILDMTYAFKDYPKIVVKRSAMRNIAHGSDLYAGGIKIIDGKFRKGERVAVISEDNDLVGTGIAMCSSDNIFMKVVDFDHIFLEADDGKDNVVRIGKEAVQKSGSGLHKDIQRSEGRKDTRTGWYGRDTGPEKTADRVWKGKNKGRVYPRSGADKGGGGKERHGRDHQ.

D43 functions as the Nucleophile in the catalytic mechanism. In terms of domain architecture, PUA spans 209-285 (YPKIVVKRSA…DHIFLEADDG (77 aa)). The interval 300-365 (SGSGLHKDIQ…GKERHGRDHQ (66 aa)) is disordered. Composition is skewed to basic and acidic residues over residues 304–318 (LHKDIQRSEGRKDTR), 326–336 (TGPEKTADRVW), and 354–365 (GGGKERHGRDHQ).

The protein belongs to the pseudouridine synthase TruB family. Type 2 subfamily.

The enzyme catalyses uridine(55) in tRNA = pseudouridine(55) in tRNA. Functionally, could be responsible for synthesis of pseudouridine from uracil-55 in the psi GC loop of transfer RNAs. This is Probable tRNA pseudouridine synthase B from Thermoplasma acidophilum (strain ATCC 25905 / DSM 1728 / JCM 9062 / NBRC 15155 / AMRC-C165).